The following is a 121-amino-acid chain: Anther-specific protein SF2 (121 aa).

Positions 1–21 are cleaved as a signal peptide; that stretch reads MANNSVSYLVLLLLVFVLAIS. Asn-115 is a glycosylation site (N-linked (GlcNAc...) asparagine).

As to expression, epidermal anther cells.

It localises to the secreted. The protein localises to the cell wall. In terms of biological role, anther-specific cell wall protein which could contribute to the cell wall architecture of epidermal anther cells via intermolecular disulfide bridges. This is Anther-specific protein SF2 from Helianthus annuus (Common sunflower).